Here is a 351-residue protein sequence, read N- to C-terminus: MFQLLAGVRMNSTGRPRAKIILLYALLIAFNIGAWLCALAAFRDHPVLLGTALLAYGLGLRHAVDADHLAAIDNVTRKLMQDGRRPITAGLWFSLGHSSVVVLASVLIAVMATTLQERLDAFHEVGSVIGTLASALFLFAIAAINLVILRSAYRAFRRVRRGGIYVEEDFDLLFGNRGFLARIFRPLFRFITRSWHMYPLGMLFALGFDTATEVALLGISTMEASRGVPIWSILVFPALFTAGMALIDTIDSILMCGAYAWAYAKPVRKLYYNMTITFVSAIVALIVGGIETLGLLADKFMLKGVFWNAVGALNENFCQLGFVIIGIFTVCWVVSIVVYRLRRYDDSEVRA.

Topologically, residues 1–19 are cytoplasmic; the sequence is MFQLLAGVRMNSTGRPRAK. The helical transmembrane segment at 20–40 threads the bilayer; sequence IILLYALLIAFNIGAWLCALA. The Periplasmic segment spans residues 41-51; the sequence is AFRDHPVLLGT. The helical transmembrane segment at 52–72 threads the bilayer; sequence ALLAYGLGLRHAVDADHLAAI. At 73–94 the chain is on the cytoplasmic side; that stretch reads DNVTRKLMQDGRRPITAGLWFS. Residues 95-115 form a helical membrane-spanning segment; it reads LGHSSVVVLASVLIAVMATTL. Residues 116 to 128 lie on the Periplasmic side of the membrane; that stretch reads QERLDAFHEVGSV. The helical transmembrane segment at 129–149 threads the bilayer; sequence IGTLASALFLFAIAAINLVIL. The Cytoplasmic portion of the chain corresponds to 150 to 199; it reads RSAYRAFRRVRRGGIYVEEDFDLLFGNRGFLARIFRPLFRFITRSWHMYP. Residues 200–220 traverse the membrane as a helical segment; that stretch reads LGMLFALGFDTATEVALLGIS. The Periplasmic portion of the chain corresponds to 221-243; sequence TMEASRGVPIWSILVFPALFTAG. A helical membrane pass occupies residues 244-264; it reads MALIDTIDSILMCGAYAWAYA. Residues 265-269 are Cytoplasmic-facing; the sequence is KPVRK. The chain crosses the membrane as a helical span at residues 270–290; that stretch reads LYYNMTITFVSAIVALIVGGI. Residues 291–316 lie on the Periplasmic side of the membrane; sequence ETLGLLADKFMLKGVFWNAVGALNEN. The chain crosses the membrane as a helical span at residues 317–337; the sequence is FCQLGFVIIGIFTVCWVVSIV. Residues 338–351 lie on the Cytoplasmic side of the membrane; that stretch reads VYRLRRYDDSEVRA.

This sequence belongs to the NiCoT transporter (TC 2.A.52) family.

It is found in the cell inner membrane. High-affinity nickel transporter responsible for nickel uptake. Necessary for high levels of activity of hydrogenase and urease. Does not transport cobalt. The protein is High-affinity nickel transport protein (hoxN) of Cupriavidus necator (strain ATCC 17699 / DSM 428 / KCTC 22496 / NCIMB 10442 / H16 / Stanier 337) (Ralstonia eutropha).